A 322-amino-acid chain; its full sequence is Tetraacyldisaccharide 4'-kinase (322 aa).

54 to 61 serves as a coordination point for ATP; that stretch reads SVGGTGKT.

The protein belongs to the LpxK family.

The enzyme catalyses a lipid A disaccharide + ATP = a lipid IVA + ADP + H(+). Its pathway is glycolipid biosynthesis; lipid IV(A) biosynthesis; lipid IV(A) from (3R)-3-hydroxytetradecanoyl-[acyl-carrier-protein] and UDP-N-acetyl-alpha-D-glucosamine: step 6/6. In terms of biological role, transfers the gamma-phosphate of ATP to the 4'-position of a tetraacyldisaccharide 1-phosphate intermediate (termed DS-1-P) to form tetraacyldisaccharide 1,4'-bis-phosphate (lipid IVA). The protein is Tetraacyldisaccharide 4'-kinase of Francisella tularensis subsp. holarctica (strain FTNF002-00 / FTA).